The sequence spans 529 residues: Serine hydroxymethyltransferase 3, chloroplastic (529 aa).

Residues 1–60 (MQACCGGNSMASLQQPGRVQGSVFPPIMPPVTKFSQQLKFNISKPFRSSFLKRNLVSEMR) constitute a chloroplast transit peptide. Position 314 is an N6-(pyridoxal phosphate)lysine (Lys-314).

This sequence belongs to the SHMT family. As to quaternary structure, homotetramer. Pyridoxal 5'-phosphate is required as a cofactor.

It localises to the plastid. The protein localises to the chloroplast. The enzyme catalyses (6R)-5,10-methylene-5,6,7,8-tetrahydrofolate + glycine + H2O = (6S)-5,6,7,8-tetrahydrofolate + L-serine. It participates in one-carbon metabolism; tetrahydrofolate interconversion. Inhibited by 5-CH3-H4PteGlu1/5 and 5-HCO-H4PteGlu1/5 in vitro. Functionally, catalyzes the interconversion of serine and glycine and directs the hydroxymethyl moiety of serine into the metabolic network of H4PteGlu(n)-bound one-carbon units. This chain is Serine hydroxymethyltransferase 3, chloroplastic, found in Arabidopsis thaliana (Mouse-ear cress).